The following is a 470-amino-acid chain: Ribulose bisphosphate carboxylase large chain (470 aa).

K5 bears the N6,N6,N6-trimethyllysine mark. The substrate site is built by N114 and T164. The active-site Proton acceptor is the K166. K168 is a substrate binding site. Residues K192, D194, and E195 each contribute to the Mg(2+) site. At K192 the chain carries N6-carboxylysine. H285 (proton acceptor) is an active-site residue. Substrate is bound by residues R286, H318, and S370.

This sequence belongs to the RuBisCO large chain family. Type I subfamily. As to quaternary structure, heterohexadecamer of 8 large chains and 8 small chains; disulfide-linked. The disulfide link is formed within the large subunit homodimers. Mg(2+) is required as a cofactor. In terms of processing, the disulfide bond which can form in the large chain dimeric partners within the hexadecamer appears to be associated with oxidative stress and protein turnover.

It localises to the plastid. Its subcellular location is the chloroplast. The enzyme catalyses 2 (2R)-3-phosphoglycerate + 2 H(+) = D-ribulose 1,5-bisphosphate + CO2 + H2O. It carries out the reaction D-ribulose 1,5-bisphosphate + O2 = 2-phosphoglycolate + (2R)-3-phosphoglycerate + 2 H(+). RuBisCO catalyzes two reactions: the carboxylation of D-ribulose 1,5-bisphosphate, the primary event in carbon dioxide fixation, as well as the oxidative fragmentation of the pentose substrate in the photorespiration process. Both reactions occur simultaneously and in competition at the same active site. This is Ribulose bisphosphate carboxylase large chain from Kigelia africana (Sausage tree).